A 427-amino-acid polypeptide reads, in one-letter code: Septin-8 (427 aa).

Positions 39-305 (QGFCFNILCV…ELYRRCKLEE (267 aa)) constitute a Septin-type G domain. The segment at 49 to 56 (GETGIGKS) is G1 motif. GTP contacts are provided by residues 49 to 56 (GETGIGKS), Gly104, 185 to 193 (KADTISKSE), Gly239, and Arg254. The tract at residues 101–104 (DTVG) is G3 motif. Residues 184-187 (AKAD) are G4 motif. The stretch at 321-409 (QETYEAKRKE…KAAMEALQSQ (89 aa)) forms a coiled coil. A disordered region spans residues 373–427 (RVHQEESKKVEDKRRDLEEEMNSFNRRKAAMEALQSQSFQATSQQPLKKDKDRKN). Over residues 374 to 389 (VHQEESKKVEDKRRDL) the composition is skewed to basic and acidic residues. A compositionally biased stretch (polar residues) spans 406–418 (LQSQSFQATSQQP).

Belongs to the TRAFAC class TrmE-Era-EngA-EngB-Septin-like GTPase superfamily. Septin GTPase family.

The protein localises to the cytoplasm. The protein resides in the cytoskeleton. It is found in the synapse. It localises to the cell projection. Its subcellular location is the axon. The protein localises to the cytoplasmic vesicle. The protein resides in the secretory vesicle. It is found in the synaptic vesicle membrane. It localises to the presynapse. This is Septin-8 from Xenopus tropicalis (Western clawed frog).